The sequence spans 184 residues: Probable cobalt-precorrin-6B C(15)-methyltransferase (decarboxylating) (184 aa).

S-adenosyl-L-methionine-binding positions include threonine 12, 36–40 (GCGTG), aspartate 59, and alanine 87.

This sequence belongs to the methyltransferase superfamily. Archaeal-type CbiT family.

It catalyses the reaction Co-precorrin-6B + S-adenosyl-L-methionine = Co-precorrin-7 + S-adenosyl-L-homocysteine + CO2. Its pathway is cofactor biosynthesis; adenosylcobalamin biosynthesis; cob(II)yrinate a,c-diamide from sirohydrochlorin (anaerobic route): step 8/10. Its function is as follows. Catalyzes the methylation of C-15 in cobalt-precorrin-6B followed by the decarboxylation of C-12 to form cobalt-precorrin-7. The protein is Probable cobalt-precorrin-6B C(15)-methyltransferase (decarboxylating) of Methanosarcina acetivorans (strain ATCC 35395 / DSM 2834 / JCM 12185 / C2A).